The following is a 26-amino-acid chain: uncharacterized protein (26 aa).

The protein resides in the plastid. Its subcellular location is the chloroplast. This is an uncharacterized protein from Trieres chinensis (Marine centric diatom).